The chain runs to 298 residues: Adaptation to cold protein C (298 aa).

In terms of assembly, interacts with the C-terminal extension of AtcJ. Also interacts with AtcB, but not with AtcA.

With respect to regulation, interaction with AtcJ stabilizes AtcC. Functionally, involved in cold adaptation. The protein is Adaptation to cold protein C of Shewanella oneidensis (strain ATCC 700550 / JCM 31522 / CIP 106686 / LMG 19005 / NCIMB 14063 / MR-1).